The primary structure comprises 221 residues: Octanoyltransferase (221 aa).

In terms of domain architecture, BPL/LPL catalytic spans 38-220 (GEIPDTLLLL…GFREVLGDPG (183 aa)). Substrate-binding positions include 84–91 (RGGDATFH), 149–151 (AIG), and 163–165 (GFA). The active-site Acyl-thioester intermediate is the Cys181.

This sequence belongs to the LipB family.

It is found in the cytoplasm. It carries out the reaction octanoyl-[ACP] + L-lysyl-[protein] = N(6)-octanoyl-L-lysyl-[protein] + holo-[ACP] + H(+). The protein operates within protein modification; protein lipoylation via endogenous pathway; protein N(6)-(lipoyl)lysine from octanoyl-[acyl-carrier-protein]: step 1/2. Catalyzes the transfer of endogenously produced octanoic acid from octanoyl-acyl-carrier-protein onto the lipoyl domains of lipoate-dependent enzymes. Lipoyl-ACP can also act as a substrate although octanoyl-ACP is likely to be the physiological substrate. The protein is Octanoyltransferase of Rubrobacter xylanophilus (strain DSM 9941 / JCM 11954 / NBRC 16129 / PRD-1).